A 219-amino-acid chain; its full sequence is MTKEGKLKLFSTYTIYGMTAEKFSNGRSNIEVVKVMLDSGIKIIQYREKYKSLKEKYKECLEIRKLTEDYEALLIVNDHADLCQMVGADGVHLGQEDLPADEVRKLLGDKFIIGVTTHTKDQVLKAKEDGADYVGLGPVFASFTKDNPHPPIGLEMVKWAAENSPLPFVAIGGIKEHNLKEVLASGARCICAVTEIVGADDIRKKIESLFKILKSFERS.

4-amino-2-methyl-5-(diphosphooxymethyl)pyrimidine-binding positions include 45-49 (QYREK) and asparagine 77. 2 residues coordinate Mg(2+): aspartate 78 and aspartate 97. Threonine 116 lines the 4-amino-2-methyl-5-(diphosphooxymethyl)pyrimidine pocket. 142–144 (SFT) serves as a coordination point for 2-[(2R,5Z)-2-carboxy-4-methylthiazol-5(2H)-ylidene]ethyl phosphate. Position 145 (lysine 145) interacts with 4-amino-2-methyl-5-(diphosphooxymethyl)pyrimidine. 2-[(2R,5Z)-2-carboxy-4-methylthiazol-5(2H)-ylidene]ethyl phosphate contacts are provided by residues glycine 173 and 193–194 (VT).

The protein belongs to the thiamine-phosphate synthase family. It depends on Mg(2+) as a cofactor.

It carries out the reaction 2-[(2R,5Z)-2-carboxy-4-methylthiazol-5(2H)-ylidene]ethyl phosphate + 4-amino-2-methyl-5-(diphosphooxymethyl)pyrimidine + 2 H(+) = thiamine phosphate + CO2 + diphosphate. The catalysed reaction is 2-(2-carboxy-4-methylthiazol-5-yl)ethyl phosphate + 4-amino-2-methyl-5-(diphosphooxymethyl)pyrimidine + 2 H(+) = thiamine phosphate + CO2 + diphosphate. It catalyses the reaction 4-methyl-5-(2-phosphooxyethyl)-thiazole + 4-amino-2-methyl-5-(diphosphooxymethyl)pyrimidine + H(+) = thiamine phosphate + diphosphate. It participates in cofactor biosynthesis; thiamine diphosphate biosynthesis; thiamine phosphate from 4-amino-2-methyl-5-diphosphomethylpyrimidine and 4-methyl-5-(2-phosphoethyl)-thiazole: step 1/1. Functionally, condenses 4-methyl-5-(beta-hydroxyethyl)thiazole monophosphate (THZ-P) and 2-methyl-4-amino-5-hydroxymethyl pyrimidine pyrophosphate (HMP-PP) to form thiamine monophosphate (TMP). This Caldicellulosiruptor bescii (strain ATCC BAA-1888 / DSM 6725 / KCTC 15123 / Z-1320) (Anaerocellum thermophilum) protein is Thiamine-phosphate synthase.